A 501-amino-acid polypeptide reads, in one-letter code: Group 3 secretory phospholipase A2 (501 aa).

The N-terminal stretch at 1-19 (MGVLVVLLGVLSFLGRTLG) is a signal peptide. The segment at 119 to 139 (RGPAESPAGTREKRAAGQNGV) is disordered. The tract at residues 150-291 (GWTVPGTLWC…SWSSPATSLT (142 aa)) is phospholipase A2-like. Residues Trp-158, Gly-160, and Gly-162 each coordinate Ca(2+). Intrachain disulfides connect Cys-159–Cys-181, Cys-180–Cys-220, Cys-187–Cys-213, and Cys-211–Cys-244. Asn-167 is a glycosylation site (N-linked (GlcNAc...) asparagine). His-184 is a catalytic residue. Asp-185 lines the Ca(2+) pocket. Asp-214 is a catalytic residue. A glycan (N-linked (GlcNAc...) asparagine) is linked at Asn-280. The segment covering 284 to 298 (SSPATSLTPSPQNPA) has biased composition (polar residues). The disordered stretch occupies residues 284-339 (SSPATSLTPSPQNPALSRPQPMQHPQQWPSEWKESKSPSKTNATALQAPVASPGSD). 2 N-linked (GlcNAc...) asparagine glycosylation sites follow: Asn-325 and Asn-403.

It belongs to the phospholipase A2 family. Ca(2+) serves as cofactor. Post-translationally, N-glycosylation does not affect the catalytic activity, but is required for proper secretion. A nonglycosylated form was observed in several cell types. In terms of processing, in several cell types, the N- and C-termini are cleaved off.

It localises to the secreted. The protein localises to the cell membrane. The protein resides in the cytoplasm. It is found in the cytoskeleton. Its subcellular location is the microtubule organizing center. It localises to the centrosome. The protein localises to the centriole. The protein resides in the recycling endosome. The enzyme catalyses a 1,2-diacyl-sn-glycero-3-phosphocholine + H2O = a 1-acyl-sn-glycero-3-phosphocholine + a fatty acid + H(+). It carries out the reaction 1-hexadecanoyl-2-(9Z,12Z-octadecadienoyl)-sn-glycero-3-phosphocholine + H2O = (9Z,12Z)-octadecadienoate + 1-hexadecanoyl-sn-glycero-3-phosphocholine + H(+). It catalyses the reaction 1-hexadecanoyl-2-(5Z,8Z,11Z,14Z-eicosatetraenoyl)-sn-glycero-3-phosphocholine + H2O = 1-hexadecanoyl-sn-glycero-3-phosphocholine + (5Z,8Z,11Z,14Z)-eicosatetraenoate + H(+). The catalysed reaction is 1-hexadecanoyl-2-(9Z,12Z-octadecadienoyl)-sn-glycero-3-phosphoethanolamine + H2O = 1-hexadecanoyl-sn-glycero-3-phosphoethanolamine + (9Z,12Z)-octadecadienoate + H(+). The enzyme catalyses 1-hexadecanoyl-2-(5Z,8Z,11Z,14Z-eicosatetraenoyl)-sn-glycero-3-phosphoethanolamine + H2O = 1-hexadecanoyl-sn-glycero-3-phosphoethanolamine + (5Z,8Z,11Z,14Z)-eicosatetraenoate + H(+). Secretory calcium-dependent phospholipase A2 that primarily targets extracellular phospholipids. Hydrolyzes the ester bond of the fatty acyl group attached at sn-2 position of phospholipids without apparent head group selectivity. Contributes to phospholipid remodeling of low-density lipoprotein (LDL) and high-density lipoprotein (HDL) particles. Hydrolyzes LDL phospholipids releasing unsaturated fatty acids that regulate macrophage differentiation toward foam cells. May act in an autocrine and paracrine manner. Secreted by immature mast cells, acts on nearby fibroblasts upstream to PTDGS to synthesize prostaglandin D2 (PGD2), which in turn promotes mast cell maturation and degranulation via PTGDR. Secreted by epididymal epithelium, acts on immature sperm cells within the duct, modulating the degree of unsaturation of the fatty acyl components of phosphatidylcholines required for acrosome assembly and sperm cell motility. Facilitates the replacement of fatty acyl chains in phosphatidylcholines in sperm membranes from omega-6 and omega-9 to omega-3 polyunsaturated fatty acids (PUFAs). Coupled to lipoxygenase pathway, may process omega-6 PUFAs to generate oxygenated lipid mediators in the male reproductive tract. At pericentrosomal preciliary compartment, negatively regulates ciliogenesis likely by regulating endocytotic recycling of ciliary membrane protein. Coupled to cyclooxygenase pathway provides arachidonate to generate prostaglandin E2 (PGE2), a potent immunomodulatory lipid in inflammation and tumorigenesis. At colonic epithelial barrier, preferentially hydrolyzes phospholipids having arachidonate and docosahexaenoate at sn-2 position, contributing to the generation of oxygenated metabolites involved in colonic stem cell homeostasis. Releases C16:0 and C18:0 lysophosphatidylcholine subclasses from neuron plasma membranes and promotes neurite outgrowth and neuron survival. This Bos taurus (Bovine) protein is Group 3 secretory phospholipase A2 (PLA2G3).